Reading from the N-terminus, the 276-residue chain is NH(3)-dependent NAD(+) synthetase (276 aa).

Residue 43-50 (GISGGVDS) coordinates ATP. Residue D49 coordinates Mg(2+). Residue R146 participates in deamido-NAD(+) binding. T166 contributes to the ATP binding site. Position 171 (E171) interacts with Mg(2+). 2 residues coordinate deamido-NAD(+): K179 and D186. ATP is bound by residues K195 and T217. 266-267 (HK) is a binding site for deamido-NAD(+).

Belongs to the NAD synthetase family. As to quaternary structure, homodimer.

It catalyses the reaction deamido-NAD(+) + NH4(+) + ATP = AMP + diphosphate + NAD(+) + H(+). Its pathway is cofactor biosynthesis; NAD(+) biosynthesis; NAD(+) from deamido-NAD(+) (ammonia route): step 1/1. In terms of biological role, catalyzes the ATP-dependent amidation of deamido-NAD to form NAD. Uses ammonia as a nitrogen source. In Shewanella baltica (strain OS223), this protein is NH(3)-dependent NAD(+) synthetase.